The chain runs to 363 residues: Serpentine receptor class beta-18 (363 aa).

A run of 7 helical transmembrane segments spans residues 52 to 72 (LAQF…VVYI), 92 to 112 (MLLF…YHII), 135 to 155 (FRYT…CIYI), 172 to 192 (LILA…IIWV), 218 to 238 (KATI…IGLF), 276 to 296 (AALM…YNFL), and 303 to 323 (TIAT…LVIV).

This sequence belongs to the nematode receptor-like protein srb family.

It localises to the membrane. This Caenorhabditis elegans protein is Serpentine receptor class beta-18 (srb-18).